Reading from the N-terminus, the 285-residue chain is Transmembrane protein 53-A (285 aa).

Residues 165-185 form a helical membrane-spanning segment; that stretch reads FLALAAFAILVIILRILLYPL.

Belongs to the TMEM53 family.

The protein localises to the nucleus outer membrane. Functionally, ensures normal bone formation, through the negative regulation of bone morphogenetic protein (BMP) signaling in osteoblast lineage cells by blocking cytoplasm-nucleus translocation of phosphorylated SMAD proteins. In Xenopus laevis (African clawed frog), this protein is Transmembrane protein 53-A (tmem53-a).